A 209-amino-acid chain; its full sequence is Imidazole glycerol phosphate synthase subunit HisH (209 aa).

The region spanning 4–209 is the Glutamine amidotransferase type-1 domain; that stretch reads PVVVFEYGSG…RLLANWIGSL (206 aa). The active-site Nucleophile is the Cys82. Residues His190 and Glu192 contribute to the active site.

As to quaternary structure, heterodimer of HisH and HisF.

It localises to the cytoplasm. The catalysed reaction is 5-[(5-phospho-1-deoxy-D-ribulos-1-ylimino)methylamino]-1-(5-phospho-beta-D-ribosyl)imidazole-4-carboxamide + L-glutamine = D-erythro-1-(imidazol-4-yl)glycerol 3-phosphate + 5-amino-1-(5-phospho-beta-D-ribosyl)imidazole-4-carboxamide + L-glutamate + H(+). It catalyses the reaction L-glutamine + H2O = L-glutamate + NH4(+). It functions in the pathway amino-acid biosynthesis; L-histidine biosynthesis; L-histidine from 5-phospho-alpha-D-ribose 1-diphosphate: step 5/9. Functionally, IGPS catalyzes the conversion of PRFAR and glutamine to IGP, AICAR and glutamate. The HisH subunit catalyzes the hydrolysis of glutamine to glutamate and ammonia as part of the synthesis of IGP and AICAR. The resulting ammonia molecule is channeled to the active site of HisF. The chain is Imidazole glycerol phosphate synthase subunit HisH from Leifsonia xyli subsp. xyli (strain CTCB07).